The primary structure comprises 535 residues: Secreted lipase 5 (535 aa).

The signal sequence occupies residues 1–17 (MHLKSLLLAALPLLLEA). N32 and N119 each carry an N-linked (GlcNAc...) asparagine glycan. Catalysis depends on S241, which acts as the Acyl-ester intermediate. N-linked (GlcNAc...) asparagine glycans are attached at residues N282, N341, N347, and N432.

This sequence belongs to the type-B carboxylesterase/lipase family.

It localises to the secreted. It catalyses the reaction a carboxylic ester + H2O = an alcohol + a carboxylate + H(+). Functionally, secreted lipase involved in plant virulence. Has a substrate preference for p-nitrophenyl esters with a carbon chain length of C8 (p-nitrophenyl caprylate). This is Secreted lipase 5 from Gibberella zeae (strain ATCC MYA-4620 / CBS 123657 / FGSC 9075 / NRRL 31084 / PH-1) (Wheat head blight fungus).